The chain runs to 368 residues: Guanylate binding protein 128up (368 aa).

Lysine 22 carries the post-translational modification (3S)-3-hydroxylysine. Residues alanine 65–arginine 290 enclose the OBG-type G domain. GTP is bound by residues glycine 71 to serine 78, aspartate 117 to isoleucine 121, and asparagine 248 to aspartate 251. Positions arginine 290–lysine 366 constitute a TGS domain.

This sequence belongs to the TRAFAC class OBG-HflX-like GTPase superfamily. OBG GTPase family. Hydroxylated (with S stereochemistry) at C-3 of Lys-22 by JMJD7. In terms of tissue distribution, expressed in posterior-lateral epidermis of the maxillary lobe.

Its function is as follows. Catalyzes the conversion of GTP to GDP through hydrolysis of the gamma-phosphate bond in GTP. Dfd/deformed is required to activate 128up in maxillary segment cells. The sequence is that of Guanylate binding protein 128up from Drosophila melanogaster (Fruit fly).